Consider the following 274-residue polypeptide: Thymidylate synthase (274 aa).

R21 provides a ligand contact to dUMP. (6R)-5,10-methylene-5,6,7,8-tetrahydrofolate is bound at residue H51. DUMP is bound at residue 123–124 (RR). Residue C156 is the Nucleophile of the active site. Residues 176–179 (RSAD), N187, and 217–219 (HIY) contribute to the dUMP site. Residue D179 participates in (6R)-5,10-methylene-5,6,7,8-tetrahydrofolate binding. A273 contacts (6R)-5,10-methylene-5,6,7,8-tetrahydrofolate.

The protein belongs to the thymidylate synthase family. Bacterial-type ThyA subfamily. As to quaternary structure, homodimer.

It localises to the cytoplasm. It carries out the reaction dUMP + (6R)-5,10-methylene-5,6,7,8-tetrahydrofolate = 7,8-dihydrofolate + dTMP. Its pathway is pyrimidine metabolism; dTTP biosynthesis. Catalyzes the reductive methylation of 2'-deoxyuridine-5'-monophosphate (dUMP) to 2'-deoxythymidine-5'-monophosphate (dTMP) while utilizing 5,10-methylenetetrahydrofolate (mTHF) as the methyl donor and reductant in the reaction, yielding dihydrofolate (DHF) as a by-product. This enzymatic reaction provides an intracellular de novo source of dTMP, an essential precursor for DNA biosynthesis. The protein is Thymidylate synthase of Flavobacterium psychrophilum (strain ATCC 49511 / DSM 21280 / CIP 103535 / JIP02/86).